We begin with the raw amino-acid sequence, 182 residues long: Large ribosomal subunit protein uL5c (182 aa).

The protein belongs to the universal ribosomal protein uL5 family. Part of the 50S ribosomal subunit; contacts the 5S rRNA.

It localises to the plastid. The protein resides in the chloroplast. Functionally, binds 5S rRNA, forms part of the central protuberance of the 50S subunit. In Emiliania huxleyi (Coccolithophore), this protein is Large ribosomal subunit protein uL5c (rpl5).